The primary structure comprises 429 residues: Protein AST1 (429 aa).

Interacts with PMA1.

The protein localises to the cell membrane. Its subcellular location is the membrane raft. It is found in the golgi apparatus membrane. It localises to the late endosome membrane. Its function is as follows. Lipid raft-associated protein involved in the targeting of PMA1 from Golgi to the plasma membrane. May induce clustering of PMA1, which facilitates partition of PMA1 into lipid rafts after leaving the ER and its transport to the cell surface. The sequence is that of Protein AST1 from Saccharomyces cerevisiae (strain ATCC 204508 / S288c) (Baker's yeast).